We begin with the raw amino-acid sequence, 231 residues long: MSLYDRDYSRSKEFENTRSSELSIFIKQTYQLFAASLLAATVGAYVGIFALASFFIQSQVTFWILFAVEIGLLFALQWKKREAPLNLVLLFGFTFCSGLTLTPLLISVLALPAGGIIIAQAFALTTVAFAGLSVFAMNTKKDFTVMGKALFIVLIVIVAASLLNLFFQSSIVNLAISAVAAILFSFYILYDTQNIIRGNYETPIEGAVALYLDFVNLFVSLLNILRSFNSR.

5 helical membrane-spanning segments follow: residues Ser36 to Ile56, Ser58 to Trp78, Ala83 to Pro103, Phe143 to Leu163, and Ser170 to Tyr190.

This sequence belongs to the BI1 family.

The protein localises to the cell membrane. This is an uncharacterized protein from Campylobacter jejuni subsp. jejuni serotype O:2 (strain ATCC 700819 / NCTC 11168).